A 308-amino-acid chain; its full sequence is Ribosomal RNA large subunit methyltransferase F (308 aa).

The segment at 190-212 (DSAASARAGSERKRRNLGQDKND) is disordered.

This sequence belongs to the methyltransferase superfamily. METTL16/RlmF family.

It localises to the cytoplasm. The catalysed reaction is adenosine(1618) in 23S rRNA + S-adenosyl-L-methionine = N(6)-methyladenosine(1618) in 23S rRNA + S-adenosyl-L-homocysteine + H(+). Its function is as follows. Specifically methylates the adenine in position 1618 of 23S rRNA. In Citrobacter koseri (strain ATCC BAA-895 / CDC 4225-83 / SGSC4696), this protein is Ribosomal RNA large subunit methyltransferase F.